A 1758-amino-acid polypeptide reads, in one-letter code: MSCSKAYGERYVASVQGSAPSPRKKSTRGFYFAKLYYEAKEYDLAKKYICTYINVREMDPRAHRFLGLLYELEENTEKAVECYRRSVELNPTQKDLVLKIAELLCKNDVTDGRAEYWVERAAKLFPGSPAIYKLKEQLLDCEGEDGWNKLFDLIQSELYVRPDDVHVNIRLVELYRSTKRLKDAVARCHEAERNIALRSSLEWNSCVVQTLKEYLESLQCLESDKSDWRATNTDLLLAYANLMLLTLSTRDVQESRELLESFDSALQSAKSSLGGNDELSATFLEMKGHFYMHAGSLLLKMGQHGNNVQWRALSELAALCYLIAFQVPRPKIKLIKGEAGQNLLEMMACDRLSQSGHMLLNLSRGKQDFLKVVVETFANKSGQSALYDALFSSQSPKDTSFLGSDDIGNIDVQEPELEDLARYDVGAIRAHNGSLQHLTWLGLQWNSLPALPGIRKWLKQLFHHLPQETSRLETNAPESICILDLEVFLLGVVYTSHLQLKEKCNSHHSSYQPLCLPLPVCKQLCTERQKSWWDAVCTLIHRKAVPGNSAKLRLLVQHEINTLRAQEKHGLQPALLVHWAKCLQKMGSGLNSFYDQREYIGRSVHYWKKVLPLLKIIKKKNSIPEPIDPLFKHFHSVDIQASEIVEYEEDAHVTFAILDAVNGNIEDAMTAFESIKSVVSYWNLALIFHRKAEDIANDALSPEEQEECKNYLRKTRGYLIKILDDSDSNLSVVKKLPVPLESVKEMLKSVMQELENYSEGGPLYKNGSLRNADSEIKHSTPSPTKYSLSPSKSYKYSPKTPPRWAEDQNSLLKMIRQEVKAIKEEMQELKLNSSKSASHHRWPTENYGPDSVPDGYQGSQTFHGAPLTVATTGPSVYYSQSPAYNSQYLLRPAANVTPTKGSSNTEFKSTKEGFSIPVSADGFKFGISEPGNQEKKSEKPLENDTGLQAQDISGRKKGRGVIFGQTSSTFTFADVAKSTSGEGFQFGKKDLNFKGFSGAGEKLFSSQYGKMANKANTSGDFEKDDDAYKTEDSDDIHFEPVVQMPEKVELVTGEEGEKVLYSQGVKLFRFDAEVSQWKERGLGNLKILKNEVNGKVRMLMQREQVLKVCANHWITTTMNLKPLSGSDRAWMWSASDFSDGDAKLERLAAKFKTPELAEEFKQKFEECQRLLLDIPLQTPHKLVDTGRAAKLIQRAEEMKSGLKDFKTFLTNDQTKVAEEENKGSGTGAAGASDTTIKPNAENTGPTLEWDNYDLREDALDDSVSSSSVHASPLASSPVRKNLFHFDESTTGSNFSFKSALSLSKSPAKLNQSGTSVGTDEESDVTQEEERDGQYFEPVVPLPDLVEVSSGEENEQVVFSHRAEFYRYDKDVGQWKERGIGDIKILQNYDNKHVRILMRRDQVLKLCANHRITPDMSLQNMKGTERVWVWTACDFADGERKVEHLAVRFKLQDVADSFKKIFDEAKTAQEKDSLITPHVSRSSTPRESPCGKIAVAVLEETTRERTDVIQGDDVADAASEVEVSSTSETTTKAVVSPPKFVFGSESVKRIFSSEKSKPFAFGNSSATGSLFGFSFNAPLKSNNSETSSVAQSGSESKVEPKKCELSKNSDIEQSSDSKVKNLSASFPTEESSINYTFKTPEKEPPLWYAEFTKEELVQKLSSTTKSADHLNGLLREIEATNAVLMEQIKLLKSEIRRLERNQEQEVSAANVEHLKNVLLQFIFLKPGSERERLLPVINTMLQLSLEEKGKLAAVAQGEE.

The residue at position 21 (serine 21) is a Phosphoserine. The stretch at 60–93 (PRAHRFLGLLYELEENTEKAVECYRRSVELNPTQ) is one TPR 1 repeat. Residues 176-229 (RSTKRLKDAVARCHEAERNIALRSSLEWNSCVVQTLKEYLESLQCLESDKSDWR) are a coiled coil. A TPR 2 repeat occupies 584–617 (QKMGSGLNSFYDQREYIGRSVHYWKKVLPLLKII). The disordered stretch occupies residues 761–805 (GPLYKNGSLRNADSEIKHSTPSPTKYSLSPSKSYKYSPKTPPRWA). Residues 779-798 (STPSPTKYSLSPSKSYKYSP) are compositionally biased toward low complexity. Positions 805–837 (AEDQNSLLKMIRQEVKAIKEEMQELKLNSSKSA) form a coiled coil. The region spanning 1037-1173 (HFEPVVQMPE…FEECQRLLLD (137 aa)) is the RanBD1 1 domain. Disordered regions lie at residues 1216-1248 (VAEE…PTLE), 1307-1335 (AKLN…GQYF), and 1581-1622 (NNSE…KNLS). A compositionally biased stretch (polar residues) spans 1236-1245 (IKPNAENTGP). The span at 1318-1330 (TDEESDVTQEEER) shows a compositional bias: acidic residues. The RanBD1 2 domain occupies 1334–1470 (YFEPVVPLPD…FDEAKTAQEK (137 aa)). The segment covering 1581–1594 (NNSETSSVAQSGSE) has biased composition (polar residues). Positions 1595–1618 (SKVEPKKCELSKNSDIEQSSDSKV) are enriched in basic and acidic residues. A GRIP domain is found at 1703–1753 (QEVSAANVEHLKNVLLQFIFLKPGSERERLLPVINTMLQLSLEEKGKLAAV).

The chain is RanBP2-like and GRIP domain-containing protein 3 (RGPD3) from Homo sapiens (Human).